Consider the following 436-residue polypeptide: Chromosomal replication initiator protein DnaA (436 aa).

Residues 1–80 form a domain I, interacts with DnaA modulators region; the sequence is MSHEAVWQHV…QAPRFELRVV (80 aa). A domain II region spans residues 80–100; the sequence is VPGVVVQEDIFQAAPAEAPRP. The interval 101–317 is domain III, AAA+ region; that stretch reads KLNPKYTFEN…GALMRAIAFA (217 aa). Residues G145, G147, K148, and T149 each coordinate ATP. Residues 318–436 are domain IV, binds dsDNA; it reads SLNGVELTRA…LLRTLREACT (119 aa).

Belongs to the DnaA family. Oligomerizes as a right-handed, spiral filament on DNA at oriC.

It is found in the cytoplasm. The enzyme catalyses ATP + H2O = ADP + phosphate + H(+). In terms of biological role, plays an essential role in the initiation and regulation of chromosomal replication. ATP-DnaA binds to the origin of replication (oriC) to initiate formation of the DNA replication initiation complex once per cell cycle. Binds the DnaA box (a 9 base pair repeat at the origin) and separates the double-stranded (ds)DNA. Forms a right-handed helical filament on oriC DNA; dsDNA binds to the exterior of the filament while single-stranded (ss)DNA is stabiized in the filament's interior. The ATP-DnaA-oriC complex binds and stabilizes one strand of the AT-rich DNA unwinding element (DUE), permitting loading of DNA polymerase. After initiation quickly degrades to an ADP-DnaA complex that is not apt for DNA replication. Binds acidic phospholipids. Functionally, the DnaA box consensus is 5'-TTATC[CA]A[CA]A-3' in this bacterium; oriC consists of 13 clustered DnaA boxes and a 40 base pair AT-rich region. ATP-DnaA binds cooperatively to multiple DnaA boxes, while ADP-DnaA binds with low cooperativity to the individual DnaA boxes. About 16-18 DnaA protein molecules bind their sites in oriC. Has a slow ATPase activity. Binds linear and supercoiled DNA. The chain is Chromosomal replication initiator protein DnaA from Thermus thermophilus (strain ATCC 27634 / DSM 579 / HB8).